A 458-amino-acid chain; its full sequence is Jacalin-related lectin 22 (458 aa).

Jacalin-type lectin domains are found at residues 5-153, 160-301, and 311-453; these read YRKL…YFVL, LYKL…YFGP, and SKKL…TIVP.

Belongs to the jacalin lectin family. In terms of assembly, component of the PYK10 complex, at least composed of PYK10/BGLU23, BGLU21, BGLU22, JAL22, JAL23, PBP1/JAL30, PBP2/JAL31, JAL32, JAL33, JAL34, JAL35, GLL22 and GLL23.

In terms of biological role, inhibitor-type lectin that may regulate the correct polymerization and activation of BGLU23/PYK10 upon tissue damage. The chain is Jacalin-related lectin 22 (JAL22) from Arabidopsis thaliana (Mouse-ear cress).